The following is a 647-amino-acid chain: MINITFPDGAVREFESGVTTFEIAQSISNSLAKKALAGKFNGKLIDTTRAITEDGSIEIVTPDHEDALPILRHSAAHLFAQAARRLFPDIHLGVGPAIEDGFYYDTDNTAGQISNEDLPRIEEEMQKIVKENFPSIREEVTKDEAREIFKNDPYKLELIEEHSEDEGGLTIYRQGEYVDLCRGPHVPSTGRIQIFHLLHVAGAYWRGNSDNAMMQRIYGTAWFDKKDLKNYLQMREEAKERDHRKLGKELDLFMISQEVGQGLPFWLPNGATIRRELERYIVNKELASGYQHVYTPPLASVELYKTSGHWDHYQEDMFPTMDMGDGEEFVLRPMNCPHHIQVFKHHVHSYRELPIRIAEIGMMHRYEKSGALTGLQRVREMSLNDGHLFVTPEQIQEEFQRALQLIIDVYEDFNLTDYRFRLSLRDPQDTHKYFDNDEMWENAQTMLRAALDEMGVDYFEAEGEAAFYGPKLDIQIKTALGKEETLSTIQLDFLLPERFDLKYIGADGEDHRPVMIHRGVISTMERFTAILIENYKGAFPTWLAPHQVTLIPVSNEKHVDYAWEVAKKLRDRGVRADVDERNEKMQFKIRASQTSKIPYQLIVGDKEMEDETVNVRRYGQKETQTVSVDNFVQAILADIANKSRVEK.

The TGS domain maps to 1–61; sequence MINITFPDGA…TEDGSIEIVT (61 aa). Residues 242 to 540 form a catalytic region; sequence DHRKLGKELD…LIENYKGAFP (299 aa). Residues cysteine 336, histidine 387, and histidine 517 each coordinate Zn(2+).

It belongs to the class-II aminoacyl-tRNA synthetase family. As to quaternary structure, homodimer. Zn(2+) serves as cofactor.

Its subcellular location is the cytoplasm. The enzyme catalyses tRNA(Thr) + L-threonine + ATP = L-threonyl-tRNA(Thr) + AMP + diphosphate + H(+). Catalyzes the attachment of threonine to tRNA(Thr) in a two-step reaction: L-threonine is first activated by ATP to form Thr-AMP and then transferred to the acceptor end of tRNA(Thr). Also edits incorrectly charged L-seryl-tRNA(Thr). The protein is Threonine--tRNA ligase of Streptococcus pneumoniae (strain 70585).